A 299-amino-acid polypeptide reads, in one-letter code: DNA-binding transcriptional repressor CapW (299 aa).

Positions 1–22 (MTDESKPTDDQPTSKGRQGARW) are disordered. A winged HTH domain region spans residues 1 to 95 (MTDESKPTDD…SFKAVFPSSA (95 aa)). A WYL domain region spans residues 96–207 (VERYLDDLLR…LTRIKCCKYV (112 aa)). The 81-residue stretch at 131 to 211 (GRRLNADIVG…KCCKYVGQDR (81 aa)) folds into the WYL domain. Positions 156–200 (YQSLTDPEGGERMLSPHALVHDGNRWHVRAYCHKRKAFRDFSLTR) are probable ligand-binding region. The tract at residues 208 to 299 (GQDRDRADED…RDEIKDLIQY (92 aa)) is WCX domain.

As to quaternary structure, homodimer.

Functionally, transcriptional regulator of a CBASS antivirus system. CBASS (cyclic oligonucleotide-based antiphage signaling system) provides immunity against bacteriophage. The CD-NTase protein synthesizes cyclic nucleotides in response to infection; these serve as specific second messenger signals. The signals activate a diverse range of effectors, leading to bacterial cell death and thus abortive phage infection. A type III CBASS system, part of a Cap17-CapW-CdnC-Cap7-Cap6-Cap18 locus. Binds specifically to palindromes that overlap the -10 site in the promoter of cdnC, found between the genes for divergently transcribed capW and cdnC (cognate DNA). Probably represses transcription bidirectionally from the promoter. This chain is DNA-binding transcriptional repressor CapW, found in Pseudomonas aeruginosa.